The following is a 737-amino-acid chain: ATP-dependent RNA helicase SUV3, mitochondrial (737 aa).

Residues 1-25 constitute a mitochondrion transit peptide; sequence MALVKYSTVFFPLRSLRLFVSIKKA. The 140-residue stretch at 226-365 folds into the Helicase ATP-binding domain; it reads EARKIRRHII…KSVLPLVKSI (140 aa). 239–246 is a binding site for ATP; it reads GPTNSGKT. Positions 390–546 constitute a Helicase C-terminal domain; sequence PIKDGIKGLR…YLKTAVTWPT (157 aa).

It belongs to the helicase family. In terms of assembly, MSU1 and SUV3 are the two components of the mitochondrial degradosome (mtEXO).

It is found in the mitochondrion matrix. The enzyme catalyses ATP + H2O = ADP + phosphate + H(+). In terms of biological role, required for intron-independent turnover and processing of mitochondrial RNA. It is a key control element in nuclear-mitochondrial interactions. This chain is ATP-dependent RNA helicase SUV3, mitochondrial (SUV3), found in Saccharomyces cerevisiae (strain ATCC 204508 / S288c) (Baker's yeast).